The chain runs to 238 residues: Ribosomal RNA small subunit methyltransferase G (238 aa).

S-adenosyl-L-methionine contacts are provided by residues G77, F82, 128–129, and R147; that span reads AE.

The protein belongs to the methyltransferase superfamily. RNA methyltransferase RsmG family.

Its subcellular location is the cytoplasm. In terms of biological role, specifically methylates the N7 position of guanine in position 535 of 16S rRNA. This chain is Ribosomal RNA small subunit methyltransferase G, found in Exiguobacterium sibiricum (strain DSM 17290 / CCUG 55495 / CIP 109462 / JCM 13490 / 255-15).